The primary structure comprises 576 residues: Keratin, type II cytoskeletal 5 (576 aa).

A head region spans residues 1 to 163; sequence MSRQSSVSFR…DPTIQRVRTE (163 aa). Phosphoserine is present on residues Ser5, Ser8, Ser16, and Ser21. The residue at position 24 (Thr24) is a Phosphothreonine; by CDK1. 8 positions are modified to phosphoserine: Ser26, Ser36, Ser46, Ser60, Ser67, Ser71, Ser74, and Ser78. A Phosphothreonine; by CDK1 modification is found at Thr147. Thr162 bears the Phosphothreonine; by AURKB mark. Residues 164-199 are coil 1A; the sequence is EREQIKTLNNKFASFIDKVRFLEQQNKVLDTKWTLL. Residues 164-477 form the IF rod domain; it reads EREQIKTLNN…KLLEGEECRL (314 aa). The linker 1 stretch occupies residues 200–218; that stretch reads QEQGTKTIKQNLDPLFEQY. The tract at residues 219–311 is coil 1B; it reads INNLRRQLDG…FFDAELSQMQ (93 aa). The tract at residues 312–334 is linker 12; that stretch reads THVSDTSVVLSMDNNRSLDLDSI. Residues 335-473 are coil 2; sequence IAEVKAQYED…ATYRKLLEGE (139 aa). The tail stretch occupies residues 474–576; sequence ECRLSGEGVG…TSSSRRSFKS (103 aa). Arg527 is subject to Omega-N-methylarginine. Residues 540-557 are compositionally biased toward gly residues; that stretch reads GFSASSGQGGGFSSGGGS. The interval 540 to 576 is disordered; it reads GFSASSGQGGGFSSGGGSSSSVKFVSTTSSSRRSFKS. A compositionally biased stretch (low complexity) spans 558–576; sequence SSSVKFVSTTSSSRRSFKS.

Belongs to the intermediate filament family. Heterodimer of a type I and a type II keratin. Heterodimer with type I keratin KRT25 leading to the formation of keratin intermediate filament (KIF) network. Forms a heterodimer (via 2B domains) with KRT14 (via 2B domains). Interacts with TCHP. Interacts with EPPK1. Interacts with AMELX. Interacts with PKP1 (via N-terminus) and PKP2. In terms of processing, phosphorylated by CDK1, AURKB and Rho-kinase, phosphorylation is regulated by the cell cycle. Thr-24 phosphorylation, mediated by CDK1, peaks during prometaphase or metaphase cells with phosphorylated filamentous structures evident throughout the cytoplasm during early mitosis. CDK1 phosphorylates Thr-24 in mitotic cells at the site of injury. Post-translationally, O-glycosylated. Expressed in the epidermis (at protein level) and testis (within pachytene spermatocytes).

It is found in the cytoplasm. Functionally, required for the formation of keratin intermediate filaments in the basal epidermis and maintenance of the skin barrier in response to mechanical stress. Regulates the recruitment of Langerhans cells to the epidermis, potentially by modulation of the abundance of macrophage chemotactic cytokines, macrophage inflammatory cytokines and CTNND1 localization in keratinocytes. This is Keratin, type II cytoskeletal 5 from Rattus norvegicus (Rat).